The primary structure comprises 141 residues: Hemoglobin subunit alpha-1 (141 aa).

One can recognise a Globin domain in the interval 1–141; sequence VLTDAEKKEV…VATVLTSKYR (141 aa). Histidine 58 provides a ligand contact to O2. Heme b is bound at residue histidine 87.

This sequence belongs to the globin family. As to quaternary structure, heterotetramer of two alpha chains and two beta chains. Red blood cells.

Functionally, involved in oxygen transport from the lung to the various peripheral tissues. The polypeptide is Hemoglobin subunit alpha-1 (Tachyglossus aculeatus aculeatus (Southeast Australian short-beaked echidna)).